A 161-amino-acid polypeptide reads, in one-letter code: Nucleotide-binding protein NE2248 (161 aa).

The protein belongs to the YajQ family.

In terms of biological role, nucleotide-binding protein. The chain is Nucleotide-binding protein NE2248 from Nitrosomonas europaea (strain ATCC 19718 / CIP 103999 / KCTC 2705 / NBRC 14298).